The chain runs to 295 residues: Putative NADH-ubiquinone oxidoreductase MJ0520 (295 aa).

8 helical membrane passes run 8–28 (LIGA…LLGL), 69–89 (LYIF…IIAI), 129–149 (VFSA…YLTT), 163–183 (IHGS…ILLV), 199–219 (IVSG…YIAE), 220–240 (AIAY…PLVI), 243–263 (PVLT…VNGL), and 273–293 (VMLQ…RLIV).

The protein belongs to the complex I subunit 1 family.

It is found in the cell membrane. The enzyme catalyses a ubiquinone + NADH + 5 H(+)(in) = a ubiquinol + NAD(+) + 4 H(+)(out). This Methanocaldococcus jannaschii (strain ATCC 43067 / DSM 2661 / JAL-1 / JCM 10045 / NBRC 100440) (Methanococcus jannaschii) protein is Putative NADH-ubiquinone oxidoreductase MJ0520.